A 68-amino-acid polypeptide reads, in one-letter code: Protein DsrB (68 aa).

It belongs to the DsrB family.

The chain is Protein DsrB from Sodalis glossinidius (strain morsitans).